The sequence spans 124 residues: Small ribosomal subunit protein uS12 (124 aa).

The residue at position 89 (D89) is a 3-methylthioaspartic acid. A disordered region spans residues 103-124 (DTAGVQNRNRGRSKYGAKRPKK). A compositionally biased stretch (basic residues) spans 111 to 124 (NRGRSKYGAKRPKK).

Belongs to the universal ribosomal protein uS12 family. Part of the 30S ribosomal subunit. Contacts proteins S8 and S17. May interact with IF1 in the 30S initiation complex.

Its function is as follows. With S4 and S5 plays an important role in translational accuracy. In terms of biological role, interacts with and stabilizes bases of the 16S rRNA that are involved in tRNA selection in the A site and with the mRNA backbone. Located at the interface of the 30S and 50S subunits, it traverses the body of the 30S subunit contacting proteins on the other side and probably holding the rRNA structure together. The combined cluster of proteins S8, S12 and S17 appears to hold together the shoulder and platform of the 30S subunit. This chain is Small ribosomal subunit protein uS12, found in Desulforudis audaxviator (strain MP104C).